A 348-amino-acid chain; its full sequence is NADH-ubiquinone oxidoreductase chain 2 (348 aa).

The next 9 helical transmembrane spans lie at 13–33, 60–80, 93–113, 149–169, 178–197, 202–219, 246–266, 274–294, and 326–346; these read VGLG…WMGL, FLTQ…NAWM, IAST…PMHF, IDPL…GWGG, ILAY…IQYA, LIAL…FLTL, LVLL…KWLI, DLPI…YFYL, and LALF…ILML.

The protein belongs to the complex I subunit 2 family.

Its subcellular location is the mitochondrion inner membrane. It carries out the reaction a ubiquinone + NADH + 5 H(+)(in) = a ubiquinol + NAD(+) + 4 H(+)(out). Its function is as follows. Core subunit of the mitochondrial membrane respiratory chain NADH dehydrogenase (Complex I) that is believed to belong to the minimal assembly required for catalysis. Complex I functions in the transfer of electrons from NADH to the respiratory chain. The immediate electron acceptor for the enzyme is believed to be ubiquinone. The protein is NADH-ubiquinone oxidoreductase chain 2 (MT-ND2) of Cyprinus carpio (Common carp).